A 257-amino-acid chain; its full sequence is Thioredoxin-dependent peroxide reductase, mitochondrial (257 aa).

Residues 1-62 constitute a mitochondrion transit peptide; it reads MAAAAGRLLW…SAFSTSSSFH (62 aa). The Thioredoxin domain maps to 64–222; sequence PAVTQHAPYF…TLRLVKAFQF (159 aa). The residue at position 84 (Lys-84) is an N6-succinyllysine. Lys-92 carries the post-translational modification N6-acetyllysine; alternate. Lys-92 bears the N6-succinyllysine; alternate mark. Catalysis depends on Cys-109, which acts as the Cysteine sulfenic acid (-SOH) intermediate. Thr-147 carries the phosphothreonine modification.

The protein belongs to the peroxiredoxin family. AhpC/Prx1 subfamily. Homodimer; disulfide-linked, upon oxidation. 6 homodimers assemble to form a ring-like dodecamer. Interacts with NEK6. Interacts with LRRK2. Interacts with MAP3K13. Interacts with RPS6KC1 (via PX domain). Post-translationally, phosphorylated by LRRK2; phosphorylation reduces perodixase activity. In terms of processing, the enzyme can be inactivated by further oxidation of the cysteine sulfenic acid (C(P)-SOH) to sulphinic acid (C(P)-SO2H) and sulphonic acid (C(P)-SO3H) instead of its condensation to a disulfide bond. S-palmitoylated. As to expression, housekeeping-type gene preferentially expressed in murine erythroleukemia (MEL) cells.

It localises to the mitochondrion. It is found in the cytoplasm. Its subcellular location is the early endosome. The catalysed reaction is a hydroperoxide + [thioredoxin]-dithiol = an alcohol + [thioredoxin]-disulfide + H2O. Functionally, thiol-specific peroxidase that catalyzes the reduction of hydrogen peroxide and organic hydroperoxides to water and alcohols, respectively. Plays a role in cell protection against oxidative stress by detoxifying peroxides. Acts synergistically with MAP3K13 to regulate the activation of NF-kappa-B in the cytosol. Required for the maintenance of physical strength. This chain is Thioredoxin-dependent peroxide reductase, mitochondrial (Prdx3), found in Mus musculus (Mouse).